Consider the following 819-residue polypeptide: Ribosome-releasing factor 2, mitochondrial (819 aa).

Residues 1 to 30 (MWKWNVRRWAGARVNISKNRLSVINVGSRY) constitute a mitochondrion transit peptide. The tr-type G domain maps to 39–327 (SKVRNIGIIA…AIVNYLPSPI (289 aa)). GTP is bound by residues 48-55 (AHIDAGKT), 113-117 (DTPGH), and 165-168 (NKMD).

Belongs to the TRAFAC class translation factor GTPase superfamily. Classic translation factor GTPase family. EF-G/EF-2 subfamily.

The protein resides in the mitochondrion. Functionally, mitochondrial GTPase that mediates the disassembly of ribosomes from messenger RNA at the termination of mitochondrial protein biosynthesis. Not involved in the GTP-dependent ribosomal translocation step during translation elongation. The protein is Ribosome-releasing factor 2, mitochondrial of Saccharomyces cerevisiae (strain RM11-1a) (Baker's yeast).